Here is an 83-residue protein sequence, read N- to C-terminus: Large ribosomal subunit protein bL31B (83 aa).

This sequence belongs to the bacterial ribosomal protein bL31 family. Type B subfamily. As to quaternary structure, part of the 50S ribosomal subunit.

Its function is as follows. Binds the 23S rRNA. The protein is Large ribosomal subunit protein bL31B of Lactobacillus delbrueckii subsp. bulgaricus (strain ATCC 11842 / DSM 20081 / BCRC 10696 / JCM 1002 / NBRC 13953 / NCIMB 11778 / NCTC 12712 / WDCM 00102 / Lb 14).